The sequence spans 435 residues: tRNA modification GTPase MnmE (435 aa).

(6S)-5-formyl-5,6,7,8-tetrahydrofolate is bound by residues Arg24, Glu82, and Lys122. Residues 219 to 360 (GFIIAIAGPP…LIAEMERRLG (142 aa)) enclose the TrmE-type G domain. Asn229 contacts K(+). GTP-binding positions include 229–234 (NAGKST), 248–254 (SPVPGTT), and 273–276 (DTAG). Ser233 provides a ligand contact to Mg(2+). Ser248, Val250, and Thr253 together coordinate K(+). Thr254 serves as a coordination point for Mg(2+). A (6S)-5-formyl-5,6,7,8-tetrahydrofolate-binding site is contributed by Lys435.

The protein belongs to the TRAFAC class TrmE-Era-EngA-EngB-Septin-like GTPase superfamily. TrmE GTPase family. Homodimer. Heterotetramer of two MnmE and two MnmG subunits. It depends on K(+) as a cofactor.

The protein localises to the cytoplasm. Functionally, exhibits a very high intrinsic GTPase hydrolysis rate. Involved in the addition of a carboxymethylaminomethyl (cmnm) group at the wobble position (U34) of certain tRNAs, forming tRNA-cmnm(5)s(2)U34. The sequence is that of tRNA modification GTPase MnmE from Azorhizobium caulinodans (strain ATCC 43989 / DSM 5975 / JCM 20966 / LMG 6465 / NBRC 14845 / NCIMB 13405 / ORS 571).